The sequence spans 557 residues: Resveratrol cleavage oxygenase 1 (557 aa).

The disordered stretch occupies residues 1–46 (MAILNDPPSSTTILSLHTPDVPPPSKPTPATTSHPQDSRNPRNLTS). Tyr144 and Lys177 together coordinate piceatannol. The trans-resveratrol site is built by Tyr144 and Lys177. Residues His211, His262, and His334 each coordinate Fe cation. Residue Glu404 coordinates piceatannol. Glu404 is a trans-resveratrol binding site. His523 lines the Fe cation pocket.

The protein belongs to the carotenoid oxygenase family. It depends on Fe(2+) as a cofactor.

The enzyme catalyses trans-resveratrol + O2 = 3,5-dihydroxybenzaldehyde + 4-hydroxybenzaldehyde. The catalysed reaction is piceatannol + O2 = 3,5-dihydroxybenzaldehyde + 3,4-dihydroxybenzaldehyde. Functionally, dioxygenase that cleaves the interphenyl C-alpha-C-beta double bond of resveratrol to yield 3,5-dihydroxybenzaldehyde and 4-hydroxybenzaldehyde. Also cleaves piceatannol, a compound that differs from resveratrol only in the occurrence of an additional hydroxyl group, which leads to the production of 3,4-dihydroxybenzaldehyde and 3,5-hydroxybenzaldehyde. The protein is Resveratrol cleavage oxygenase 1 of Botryotinia fuckeliana (strain B05.10) (Noble rot fungus).